The following is a 237-amino-acid chain: Phosphoribosylaminoimidazole-succinocarboxamide synthase (237 aa).

This sequence belongs to the SAICAR synthetase family.

The enzyme catalyses 5-amino-1-(5-phospho-D-ribosyl)imidazole-4-carboxylate + L-aspartate + ATP = (2S)-2-[5-amino-1-(5-phospho-beta-D-ribosyl)imidazole-4-carboxamido]succinate + ADP + phosphate + 2 H(+). It participates in purine metabolism; IMP biosynthesis via de novo pathway; 5-amino-1-(5-phospho-D-ribosyl)imidazole-4-carboxamide from 5-amino-1-(5-phospho-D-ribosyl)imidazole-4-carboxylate: step 1/2. The protein is Phosphoribosylaminoimidazole-succinocarboxamide synthase of Escherichia coli O7:K1 (strain IAI39 / ExPEC).